Consider the following 203-residue polypeptide: Guanylate kinase (203 aa).

The 179-residue stretch at glycine 5–valine 183 folds into the Guanylate kinase-like domain. An ATP-binding site is contributed by alanine 12–threonine 19.

It belongs to the guanylate kinase family.

The protein localises to the cytoplasm. It carries out the reaction GMP + ATP = GDP + ADP. In terms of biological role, essential for recycling GMP and indirectly, cGMP. This chain is Guanylate kinase, found in Geobacter metallireducens (strain ATCC 53774 / DSM 7210 / GS-15).